A 408-amino-acid chain; its full sequence is LL-diaminopimelate aminotransferase (408 aa).

Substrate contacts are provided by Tyr15 and Gly42. Residues Tyr72, 108–109 (SK), Tyr132, Asn187, Tyr218, and 246–248 (SFS) contribute to the pyridoxal 5'-phosphate site. Substrate contacts are provided by Lys109, Tyr132, and Asn187. Lys249 carries the post-translational modification N6-(pyridoxal phosphate)lysine. Residues Arg257 and Asn292 each coordinate pyridoxal 5'-phosphate. Residues Asn292 and Arg388 each coordinate substrate.

The protein belongs to the class-I pyridoxal-phosphate-dependent aminotransferase family. LL-diaminopimelate aminotransferase subfamily. In terms of assembly, homodimer. Pyridoxal 5'-phosphate serves as cofactor.

It carries out the reaction (2S,6S)-2,6-diaminopimelate + 2-oxoglutarate = (S)-2,3,4,5-tetrahydrodipicolinate + L-glutamate + H2O + H(+). Its pathway is amino-acid biosynthesis; L-lysine biosynthesis via DAP pathway; LL-2,6-diaminopimelate from (S)-tetrahydrodipicolinate (aminotransferase route): step 1/1. Its function is as follows. Involved in the synthesis of meso-diaminopimelate (m-DAP or DL-DAP), required for both lysine and peptidoglycan biosynthesis. Catalyzes the direct conversion of tetrahydrodipicolinate to LL-diaminopimelate. This is LL-diaminopimelate aminotransferase from Leptospira biflexa serovar Patoc (strain Patoc 1 / Ames).